The chain runs to 284 residues: NAD kinase (284 aa).

Catalysis depends on Asp61, which acts as the Proton acceptor. NAD(+) is bound by residues 61–62 (DG), Arg66, 136–137 (ND), Arg147, Lys164, Asp166, and Leu201.

It belongs to the NAD kinase family. It depends on a divalent metal cation as a cofactor.

The protein resides in the cytoplasm. It carries out the reaction NAD(+) + ATP = ADP + NADP(+) + H(+). Functionally, involved in the regulation of the intracellular balance of NAD and NADP, and is a key enzyme in the biosynthesis of NADP. Catalyzes specifically the phosphorylation on 2'-hydroxyl of the adenosine moiety of NAD to yield NADP. The polypeptide is NAD kinase (Dehalococcoides mccartyi (strain ATCC BAA-2100 / JCM 16839 / KCTC 5957 / BAV1)).